The following is a 469-amino-acid chain: MALQTDTQAWRVGIGTRGLMFSNCVPLHLPEGQYHKLRLPVSAYEALAVARYGLVGSLWEVPAVNSALQCLAAAAPCKDVKIYPSCIFQVHAPMFVTIKTSLRCLNPHDLCLCLICVGAAILDIPLLCAPRDGAGARAAEGQAAAAKGGKLRVWGRLSPSSPTSLSLAFPYAGPPPVAWYRHYIKLTRSEGVGIGKDCAQDHACPVPPQGHASSAADQAGVPERGRKRAHEGPEAGEAASTGRGDVALSQSRALLWRGLGWDTGRGRLAPGLAMSRDAASGSVHLDIQVDRAEEGWVCDVLLEPGPPTAREGCFLSMDPGLVTMKDAWTLFPLHPEHDAVVPPKEEIHVMAQGHLQGGTPSLWGFTFQEAACDQWVLRPRVWTAHSPIKMTVYNCGHKPLHIGPSTRLGLALFWPAERSDNLDAGRIFYQLTSGELYWGRTVARPPTLTLPVDELRPWPKLTPEEPMQH.

The segment at 203-245 is disordered; the sequence is ACPVPPQGHASSAADQAGVPERGRKRAHEGPEAGEAASTGRGD.

Belongs to the epstein-barr virus LF1 family.

This is an uncharacterized protein from Homo sapiens (Human).